Here is a 490-residue protein sequence, read N- to C-terminus: Selenium-binding protein 1 (490 aa).

Ala-2 carries the post-translational modification N-acetylalanine. Cys-21 and Cys-22 together coordinate selenite.

The protein belongs to the selenium-binding protein family. As to quaternary structure, interacts with GRXS14 and GRXS16. Interacts with DALL3. In terms of tissue distribution, expressed in seedlings, roots, leaves, stems and flowers.

Its function is as follows. Binds cadmium and mediates lower sensitivity to stress requiring glutathione (GSH) for tolerance (e.g. cadmium, selenate, and hydrogen peroxide excess). Probably helps to detoxify cadmium potentially through direct binding. Binds selenium, cadmium, zinc and nickel in vitro. This Arabidopsis thaliana (Mouse-ear cress) protein is Selenium-binding protein 1.